Here is a 152-residue protein sequence, read N- to C-terminus: MSQLCPCGSAVEYSLCCHPYVSGEKVAPDPEHLMRSRYCAFVMKDADYLIKTWHPSCGAAALRAELIAGFAHTEWLGLTVFEHCWQDVDNIGFVSFVARFTEGGKTGAIIERSRFLKENGQWYYIDGTRPQFGRNDPCPCGSGKKFKKCCGQ.

The protein belongs to the UPF0225 family.

This is UPF0225 protein YchJ from Escherichia coli O17:K52:H18 (strain UMN026 / ExPEC).